Here is a 294-residue protein sequence, read N- to C-terminus: N-acetylmuramic acid 6-phosphate etherase (294 aa).

The SIS domain maps to valine 54–lysine 217. Catalysis depends on glutamate 82, which acts as the Proton donor. Glutamate 113 is an active-site residue.

It belongs to the GCKR-like family. MurNAc-6-P etherase subfamily. Homodimer.

The catalysed reaction is N-acetyl-D-muramate 6-phosphate + H2O = N-acetyl-D-glucosamine 6-phosphate + (R)-lactate. The protein operates within amino-sugar metabolism; N-acetylmuramate degradation. Its function is as follows. Specifically catalyzes the cleavage of the D-lactyl ether substituent of MurNAc 6-phosphate, producing GlcNAc 6-phosphate and D-lactate. The chain is N-acetylmuramic acid 6-phosphate etherase from Bacillus cereus (strain AH187).